A 330-amino-acid polypeptide reads, in one-letter code: D-cysteine desulfhydrase (330 aa).

At Lys52 the chain carries N6-(pyridoxal phosphate)lysine.

Belongs to the ACC deaminase/D-cysteine desulfhydrase family. In terms of assembly, homodimer. Requires pyridoxal 5'-phosphate as cofactor.

It carries out the reaction D-cysteine + H2O = hydrogen sulfide + pyruvate + NH4(+) + H(+). Its function is as follows. Catalyzes the alpha,beta-elimination reaction of D-cysteine and of several D-cysteine derivatives. It could be a defense mechanism against D-cysteine. The polypeptide is D-cysteine desulfhydrase (Yersinia enterocolitica serotype O:8 / biotype 1B (strain NCTC 13174 / 8081)).